A 1021-amino-acid chain; its full sequence is Ubiquitin-activating enzyme E1 1 (1021 aa).

3 residues coordinate ATP: Arg-22, Ala-442, and Asp-468. Residue Asp-470 coordinates Mg(2+). ATP-binding positions include Arg-479, Lys-492, Val-518, and 542-543; that span reads DN. Asp-542 is a Mg(2+) binding site. Catalysis depends on Cys-598, which acts as the Glycyl thioester intermediate.

The protein belongs to the ubiquitin-activating E1 family. As to quaternary structure, monomer.

The protein localises to the cytoplasm. It localises to the nucleus. The catalysed reaction is ATP + ubiquitin + [E1 ubiquitin-activating enzyme]-L-cysteine = AMP + diphosphate + S-ubiquitinyl-[E1 ubiquitin-activating enzyme]-L-cysteine.. Its pathway is protein modification; protein ubiquitination. Functionally, E1 ubiquitin-activating enzyme that catalyzes the first step in ubiquitin conjugation to mark cellular proteins for degradation through the ubiquitin-proteasome system. Activates ubiquitin by first adenylating its C-terminal glycine residue with ATP, and thereafter linking this residue to the side chain of a cysteine residue in E1, yielding a ubiquitin-E1 thioester and free AMP. This Candida albicans (strain WO-1) (Yeast) protein is Ubiquitin-activating enzyme E1 1 (UBA1).